The chain runs to 286 residues: Divergent deoxyribose-phosphate aldolase-like protein (286 aa).

In terms of assembly, homodimer. Interacts with ADF; the interaction enhances ADF activity in disassembly of filamentous actin and inhibition of actin polymerization.

Its subcellular location is the cytoplasm. In terms of biological role, involved in regulation of actin dynamics. The sequence is that of Divergent deoxyribose-phosphate aldolase-like protein from Toxoplasma gondii.